We begin with the raw amino-acid sequence, 793 residues long: Flavin carrier protein 1 (793 aa).

A signal peptide spans 1–21; sequence MQVLVTLWCLICTCLVLPVAA. Topologically, residues 22-163 are lumenal; that stretch reads KKRTLTASSL…FFSNGKTVSQ (142 aa). Asn143 carries N-linked (GlcNAc...) asparagine glycosylation. Residues 164–184 form a helical membrane-spanning segment; the sequence is IGVKWVTAVIAGIGLLTSAVL. Residues 185–194 are Cytoplasmic-facing; that stretch reads STFGNSTAAS. Residues 195 to 215 form a helical membrane-spanning segment; it reads HISANTMSLFLYFQSVAVVAM. The Lumenal portion of the chain corresponds to 216-223; that stretch reads QHVDSVPP. A helical transmembrane segment spans residues 224–244; the sequence is IAAAWSENLAWSMGLIRITFM. At 245–249 the chain is on the cytoplasmic side; sequence QKIFR. The chain crosses the membrane as a helical span at residues 250 to 272; that stretch reads WYVEATGGSASLYLTATTMSVLT. The Lumenal portion of the chain corresponds to 273–317; it reads QRGLDYLKNTSVYKRAENVLYGNSNTLIFRGIKRMGYRMKIENTA. N-linked (GlcNAc...) asparagine glycosylation occurs at Asn281. Residues 318–338 form a helical membrane-spanning segment; that stretch reads IVCTGFTFFVLCGYFLAGFIM. Topologically, residues 339-372 are cytoplasmic; that stretch reads ACKYSIELCIRCGWMRSDRFYQFRKNWRSVLKGS. A helical transmembrane segment spans residues 373-393; the sequence is LLRYIYIGFTQLTILSFWEFT. Topologically, residues 394-397 are lumenal; it reads ERDS. The helical transmembrane segment at 398 to 418 threads the bilayer; the sequence is AGVIVIACLFIVLSCGLMAWA. At 419-461 the chain is on the cytoplasmic side; the sequence is AYRTIFFASKSVEMYNNPAALLYGDEYVLNKYGFFYTMFNAKH. The helical transmembrane segment at 462–482 threads the bilayer; the sequence is YWWNALLTTYILVKALFVGFA. At 483–484 the chain is on the lumenal side; sequence QA. The chain crosses the membrane as a helical span at residues 485 to 505; it reads SGKTQALAIFIIDLAYFVAII. At 506 to 516 the chain is on the cytoplasmic side; it reads RYKPYLDRPTN. The chain crosses the membrane as a helical span at residues 517 to 537; sequence IVNIFICTVTLVNSFLFMFFS. At 538–551 the chain is on the lumenal side; the sequence is NLFNQKYAVSAIMG. The helical transmembrane segment at 552–572 threads the bilayer; sequence WVFFIMNAAFSLLLLLMILAF. The Cytoplasmic segment spans residues 573–793; that stretch reads TTIILFSKNP…KANILDPDYL (221 aa). Ser610 is modified (phosphoserine). Thr626 is subject to Phosphothreonine. Disordered regions lie at residues 649–674 and 689–731; these read YDDEKTGTNSENAESSSKETTRPTFS and KLGS…QESE. Residues 701–719 are compositionally biased toward polar residues; sequence ITQQEVSPDRASSSPNSKS. 2 positions are modified to phosphoserine: Ser771 and Ser774.

This sequence belongs to the transient receptor potential (TRP) ion channel family.

The protein localises to the endoplasmic reticulum membrane. May be responsible for the transport of FAD into the endoplasmic reticulum lumen, where it is required for oxidative protein folding. The sequence is that of Flavin carrier protein 1 (FLC1) from Saccharomyces cerevisiae (strain ATCC 204508 / S288c) (Baker's yeast).